We begin with the raw amino-acid sequence, 992 residues long: Disks large-associated protein 4 (992 aa).

Positions 1–20 are enriched in basic and acidic residues; sequence MKGLGDSRPRHLSDSLDPPH. 3 disordered regions span residues 1-30, 47-66, and 157-206; these read MKGL…TDRN, PGQN…QLPP, and LEGT…GWWS. Positions 162–171 are enriched in gly residues; sequence GKVGGNGSKK. Basic and acidic residues predominate over residues 172-194; it reads GGMEDGKGRRAKSKERAKAGEPK. A phosphoserine mark is found at serine 206 and serine 207. Residue arginine 291 is modified to Omega-N-methylarginine. The segment at 342–396 is disordered; the sequence is STTLLSPRETDAAAEGPIPCRRMRSGSYIKAMGDEDSDESGGSPKPSPKTAARRQ. 6 positions are modified to phosphoserine: serine 378, serine 381, serine 388, serine 405, serine 415, and serine 421. Disordered stretches follow at residues 527-751, 763-798, and 915-992; these read SVSL…GPRQ, SYGD…AQPG, and TPEK…QTRL. Low complexity predominate over residues 528-554; sequence VSLQSLSPPPSTGSLSNSRTLPSSSCL. The segment covering 576-591 has biased composition (polar residues); it reads VTVQSSTESAQDTYLD. 6 positions are modified to phosphoserine: serine 580, serine 581, serine 609, serine 611, serine 665, and serine 744. The span at 600–620 shows a compositional bias: low complexity; the sequence is TSQSGLSNSSDSLDSSTRPPS. Phosphothreonine is present on threonine 915. Composition is skewed to basic and acidic residues over residues 915-925 and 940-958; these read TPEKRKEEKKP and VSRD…EARK. Over residues 969–978 the composition is skewed to polar residues; the sequence is VRQNSATESA. Residue serine 973 is modified to Phosphoserine.

This sequence belongs to the SAPAP family. As to quaternary structure, interacts with DLG1 and DLG4/PSD-95.

It is found in the membrane. In terms of biological role, may play a role in the molecular organization of synapses and neuronal cell signaling. Could be an adapter protein linking ion channel to the subsynaptic cytoskeleton. May induce enrichment of PSD-95/SAP90 at the plasma membrane. This chain is Disks large-associated protein 4 (DLGAP4), found in Homo sapiens (Human).